The sequence spans 309 residues: tRNA dimethylallyltransferase (309 aa).

Glycine 10–threonine 17 serves as a coordination point for ATP. Threonine 12–threonine 17 lines the substrate pocket. An interaction with substrate tRNA region spans residues aspartate 35–glutamine 38.

It belongs to the IPP transferase family. In terms of assembly, monomer. The cofactor is Mg(2+).

The catalysed reaction is adenosine(37) in tRNA + dimethylallyl diphosphate = N(6)-dimethylallyladenosine(37) in tRNA + diphosphate. In terms of biological role, catalyzes the transfer of a dimethylallyl group onto the adenine at position 37 in tRNAs that read codons beginning with uridine, leading to the formation of N6-(dimethylallyl)adenosine (i(6)A). This chain is tRNA dimethylallyltransferase, found in Clostridium botulinum (strain Eklund 17B / Type B).